Here is a 383-residue protein sequence, read N- to C-terminus: MSWQDKIAQGLQRRRDAAAYRTRQVNEGANGRWLQSGERQYLNFSSNDYLGLSQNDEVIAAWQQGARRYGVGSGGSGHVTGYSQPHARLEQQLADWLGYPRALLFISGYAANQAVLTALTDADDRILADKLSHASLLEAAAHSPAQLRRFQHNQPEALQNLLIKPCQGQTLVVTEGVFSMDGDSAPLAALQQQTSAAGGWLLVDDAHGIGVHGEGGRGSCWLQGVQPELLVVTFGKAFGLSGAAVLCQEPVAEYLLQYARHLIYSTAMPPAQACALQAALRQVQQGDALRQQLQQRIRQFRTAAAHLPLQLGASKTAIQPLLVGDNQQSLIWAEQLRAAGLWVTAIRPPTVPPGSARLRITLSAAHQPEDIDRLLEVLYGLCH.

Arg21 lines the substrate pocket. 108-109 (GY) provides a ligand contact to pyridoxal 5'-phosphate. His133 contributes to the substrate binding site. Pyridoxal 5'-phosphate-binding residues include Ser179, His207, and Thr233. Position 236 is an N6-(pyridoxal phosphate)lysine (Lys236). Thr350 provides a ligand contact to substrate.

This sequence belongs to the class-II pyridoxal-phosphate-dependent aminotransferase family. BioF subfamily. In terms of assembly, homodimer. It depends on pyridoxal 5'-phosphate as a cofactor.

It catalyses the reaction 6-carboxyhexanoyl-[ACP] + L-alanine + H(+) = (8S)-8-amino-7-oxononanoate + holo-[ACP] + CO2. Its pathway is cofactor biosynthesis; biotin biosynthesis. Its function is as follows. Catalyzes the decarboxylative condensation of pimeloyl-[acyl-carrier protein] and L-alanine to produce 8-amino-7-oxononanoate (AON), [acyl-carrier protein], and carbon dioxide. This chain is 8-amino-7-oxononanoate synthase, found in Yersinia pestis bv. Antiqua (strain Angola).